We begin with the raw amino-acid sequence, 379 residues long: Chaperone protein DnaJ (379 aa).

A J domain is found at 5 to 69; sequence DYYEVLGISK…NKRATIDQFG (65 aa). The segment at 136 to 218 adopts a CR-type zinc-finger fold; the sequence is GTTKEISIRK…CHGKGTENKT (83 aa). Positions 149, 152, 166, 169, 192, 195, 206, and 209 each coordinate Zn(2+). CXXCXGXG motif repeat units follow at residues 149-156, 166-173, 192-199, and 206-213; these read CETCHGDG, CSYCNGAG, CPKCNGSG, and CPTCHGKG.

This sequence belongs to the DnaJ family. In terms of assembly, homodimer. Requires Zn(2+) as cofactor.

The protein resides in the cytoplasm. Participates actively in the response to hyperosmotic and heat shock by preventing the aggregation of stress-denatured proteins and by disaggregating proteins, also in an autonomous, DnaK-independent fashion. Unfolded proteins bind initially to DnaJ; upon interaction with the DnaJ-bound protein, DnaK hydrolyzes its bound ATP, resulting in the formation of a stable complex. GrpE releases ADP from DnaK; ATP binding to DnaK triggers the release of the substrate protein, thus completing the reaction cycle. Several rounds of ATP-dependent interactions between DnaJ, DnaK and GrpE are required for fully efficient folding. Also involved, together with DnaK and GrpE, in the DNA replication of plasmids through activation of initiation proteins. This is Chaperone protein DnaJ from Staphylococcus aureus.